A 90-amino-acid chain; its full sequence is Small ribosomal subunit protein uS15 (90 aa).

Belongs to the universal ribosomal protein uS15 family. As to quaternary structure, part of the 30S ribosomal subunit. Forms a bridge to the 50S subunit in the 70S ribosome, contacting the 23S rRNA.

One of the primary rRNA binding proteins, it binds directly to 16S rRNA where it helps nucleate assembly of the platform of the 30S subunit by binding and bridging several RNA helices of the 16S rRNA. In terms of biological role, forms an intersubunit bridge (bridge B4) with the 23S rRNA of the 50S subunit in the ribosome. This chain is Small ribosomal subunit protein uS15, found in Helicobacter acinonychis (strain Sheeba).